Consider the following 1154-residue polypeptide: Large proline-rich protein BAG6 (1154 aa).

Position 1 is an N-acetylmethionine (M1). The Ubiquitin-like domain maps to L17 to T92. Disordered regions lie at residues R87–H125, R186–P274, T387–P442, Q463–G531, and A568–D626. S96 is subject to Phosphoserine. A compositionally biased stretch (low complexity) spans S96–A112. T117 is subject to Phosphothreonine. Residues V209–P218 are compositionally biased toward polar residues. The stretch at R237–H271 is repeat 1. The segment at R237 to M658 is 4 X 29 AA approximate repeats. Pro residues predominate over residues G249–A263. Low complexity predominate over residues G400 to A409. Residues Q410–E426 show a composition bias toward polar residues. Copy 2 of the repeat occupies P416–V444. Composition is skewed to pro residues over residues A428–S439 and P508–P521. Composition is skewed to low complexity over residues A568 to P581 and P591 to P609. Tandem repeats lie at residues S597–A624 and S630–M658. Positions P611–P622 are enriched in pro residues. Disordered regions lie at residues Q673–P719 and P968–P1154. Positions A678–S702 are enriched in pro residues. S986 and S995 each carry phosphoserine. The span at A1029–P1042 shows a compositional bias: low complexity. Positions W1032 to D1062 are required for interaction with GET4. The Nuclear localization site signature appears at A1034–M1076. The sufficient for the delivery of client proteins to the endoplasmic reticulum stretch occupies residues I1044–P1154. A Phosphothreonine modification is found at T1075. A BAG-similar domain, required and sufficient for interaction with UBL4A region spans residues G1080 to N1137. Low complexity predominate over residues A1088–A1098. S1103 and S1139 each carry phosphoserine.

Component of the BAG6/BAT3 complex, also named BAT3 complex, at least composed of BAG6, UBL4A and GET4/TRC35. Interacts with GET4; the interaction is direct and localizes BAG6 in the cytosol. Interacts with UBL4A; the interaction is direct and required for UBL4A protein stability. Interacts with AIFM1. Interacts with HSPA2. Interacts with CTCFL. Interacts with p300/EP300. Interacts (via ubiquitin-like domain) with RNF126; required for BAG6-dependent ubiquitination of proteins mislocalized to the cytosol. Interacts (via ubiquitin-like domain) with SGTA; SGTA competes with RNF126 by binding the same region of BAG6, thereby promoting deubiquitination of BAG6-target proteins and rescuing them from degradation. Interacts with ricin A chain. Interacts with VCP and AMFR; both form the VCP/p97-AMFR/gp78 complex. Interacts with SYVN1. Interacts with USP13; the interaction is direct and may mediate UBL4A deubiquitination. Interacts with ZFAND2B. Interacts with KPNA2. Interacts with UBQLN4. Post-translationally, ricin can induce a cleavage by the caspase CASP3. The released C-terminal peptide induces apoptosis.

The protein localises to the cytoplasm. It localises to the cytosol. The protein resides in the nucleus. Its subcellular location is the secreted. It is found in the extracellular exosome. In terms of biological role, ATP-independent molecular chaperone preventing the aggregation of misfolded and hydrophobic patches-containing proteins. Functions as part of a cytosolic protein quality control complex, the BAG6/BAT3 complex, which maintains these client proteins in a soluble state and participates in their proper delivery to the endoplasmic reticulum or alternatively can promote their sorting to the proteasome where they undergo degradation. The BAG6/BAT3 complex is involved in the post-translational delivery of tail-anchored/type II transmembrane proteins to the endoplasmic reticulum membrane. Recruited to ribosomes, it interacts with the transmembrane region of newly synthesized tail-anchored proteins and together with SGTA and ASNA1 mediates their delivery to the endoplasmic reticulum. Client proteins that cannot be properly delivered to the endoplasmic reticulum are ubiquitinated by RNF126, an E3 ubiquitin-protein ligase associated with BAG6 and are sorted to the proteasome. SGTA which prevents the recruitment of RNF126 to BAG6 may negatively regulate the ubiquitination and the proteasomal degradation of client proteins. Similarly, the BAG6/BAT3 complex also functions as a sorting platform for proteins of the secretory pathway that are mislocalized to the cytosol either delivering them to the proteasome for degradation or to the endoplasmic reticulum. The BAG6/BAT3 complex also plays a role in the endoplasmic reticulum-associated degradation (ERAD), a quality control mechanism that eliminates unwanted proteins of the endoplasmic reticulum through their retrotranslocation to the cytosol and their targeting to the proteasome. It maintains these retrotranslocated proteins in an unfolded yet soluble state condition in the cytosol to ensure their proper delivery to the proteasome. BAG6 is also required for selective ubiquitin-mediated degradation of defective nascent chain polypeptides by the proteasome. In this context, it may participate in the production of antigenic peptides and play a role in antigen presentation in immune response. BAG6 is also involved in endoplasmic reticulum stress-induced pre-emptive quality control, a mechanism that selectively attenuates the translocation of newly synthesized proteins into the endoplasmic reticulum and reroutes them to the cytosol for proteasomal degradation. BAG6 may ensure the proper degradation of these proteins and thereby protects the endoplasmic reticulum from protein overload upon stress. By inhibiting the polyubiquitination and subsequent proteasomal degradation of HSPA2 it may also play a role in the assembly of the synaptonemal complex during spermatogenesis. Also positively regulates apoptosis by interacting with and stabilizing the proapoptotic factor AIFM1. By controlling the steady-state expression of the IGF1R receptor, indirectly regulates the insulin-like growth factor receptor signaling pathway. Involved in DNA damage-induced apoptosis: following DNA damage, accumulates in the nucleus and forms a complex with p300/EP300, enhancing p300/EP300-mediated p53/TP53 acetylation leading to increase p53/TP53 transcriptional activity. When nuclear, may also act as a component of some chromatin regulator complex that regulates histone 3 'Lys-4' dimethylation (H3K4me2). Functionally, released extracellularly via exosomes, it is a ligand of the natural killer/NK cells receptor NCR3 and stimulates NK cells cytotoxicity. It may thereby trigger NK cells cytotoxicity against neighboring tumor cells and immature myeloid dendritic cells (DC). Its function is as follows. May mediate ricin-induced apoptosis. The sequence is that of Large proline-rich protein BAG6 from Mus musculus (Mouse).